The following is a 370-amino-acid chain: NSFL1 cofactor p47 (370 aa).

Polar residues predominate over residues 54–73 (SQATPSSVSRGTAPSDNRVT). The disordered stretch occupies residues 54–116 (SQATPSSVSR…VGPPRKKSPN (63 aa)). Phosphoserine occurs at positions 74, 102, 114, and 140. Residues 109-115 (PPRKKSP) carry the Nuclear localization signal motif. Position 167 is a phosphotyrosine (Tyr167). Positions 172–175 (KRQH) match the Nuclear localization signal motif. Phosphoserine occurs at positions 176, 192, and 272. One can recognise an SEP domain in the interval 179–244 (DVHVVLKLWK…MEDHRDEDFV (66 aa)). Residues 261–287 (GSTAPQVLSTSSPAQQAENEAKASSSI) show a composition bias toward polar residues. The interval 261–289 (GSTAPQVLSTSSPAQQAENEAKASSSILI) is disordered. Positions 291–368 (ESEPTTNIQI…NLLNAVIVQR (78 aa)) constitute a UBX domain.

It belongs to the NSFL1C family. Part of a ternary complex containing STX5A, NSFL1C and VCP. NSFL1C forms a homotrimer that binds to one end of a VCP homohexamer. The complex binds to membranes enriched in phosphatidylethanolamine-containing lipids and promotes Golgi membrane fusion. Interaction with VCIP135 leads to dissociation of the complex via ATP hydrolysis by VCP. Binds ubiquitin and mono-ubiquitinated proteins via its N-terminal UBA-like domain when bound to VCP. Phosphorylated during mitosis. Phosphorylation inhibits interaction with Golgi membranes and is required for the fragmentation of the Golgi stacks during mitosis.

Its subcellular location is the nucleus. It is found in the golgi apparatus. The protein localises to the golgi stack. It localises to the chromosome. The protein resides in the cytoplasm. Its subcellular location is the cytoskeleton. It is found in the microtubule organizing center. The protein localises to the centrosome. Functionally, reduces the ATPase activity of VCP. Necessary for the fragmentation of Golgi stacks during mitosis and for VCP-mediated reassembly of Golgi stacks after mitosis. May play a role in VCP-mediated formation of transitional endoplasmic reticulum (tER). Inhibits the activity of CTSL (in vitro). Together with UBXN2B/p37, regulates the centrosomal levels of kinase AURKA/Aurora A during mitotic progression by promoting AURKA removal from centrosomes in prophase. Also, regulates spindle orientation during mitosis. This Homo sapiens (Human) protein is NSFL1 cofactor p47 (NSFL1C).